Reading from the N-terminus, the 338-residue chain is tRNA N6-adenosine threonylcarbamoyltransferase (338 aa).

H110 and H114 together coordinate Fe cation. Residues 132-136 (VLSGG), D165, G178, and N274 contribute to the substrate site. Position 298 (D298) interacts with Fe cation.

Belongs to the KAE1 / TsaD family. Requires Fe(2+) as cofactor.

The protein resides in the cytoplasm. It catalyses the reaction L-threonylcarbamoyladenylate + adenosine(37) in tRNA = N(6)-L-threonylcarbamoyladenosine(37) in tRNA + AMP + H(+). Required for the formation of a threonylcarbamoyl group on adenosine at position 37 (t(6)A37) in tRNAs that read codons beginning with adenine. Is involved in the transfer of the threonylcarbamoyl moiety of threonylcarbamoyl-AMP (TC-AMP) to the N6 group of A37, together with TsaE and TsaB. TsaD likely plays a direct catalytic role in this reaction. This is tRNA N6-adenosine threonylcarbamoyltransferase from Borrelia duttonii (strain Ly).